The chain runs to 881 residues: Sodium/sulfate cotransporter 1 (881 aa).

The next 6 helical transmembrane spans lie at 8–28 (GIVA…DWVG), 31–51 (ITFT…VTVA), 61–81 (GLLT…TGGL), 107–127 (MVLS…PILI), 140–160 (LLIP…IGTS), and 186–206 (IFDI…FILL). 4 consecutive RCK C-terminal domains span residues 212–296 (LPGN…EYGL), 318–402 (VFSA…IKTN), 407–492 (LHAV…FPGL), and 498–584 (EQVD…DKSF). The next 6 membrane-spanning stretches (helical) occupy residues 601–621 (MIIG…GGLK), 625–645 (YIHL…TGCM), 658–678 (VYLT…TGVA), 684–704 (AIIS…AIYI), 775–795 (FAIV…FILV), and 803–823 (VWIV…LYFL). The segment at 854-881 (SLRRQVSHTRTDDSGSSGSPLPAPKIVA) is disordered.

It belongs to the divalent anion:Na+ symporter (DASS) superfamily. Na+/sulfate symporter (TC 2.A.47.4) family.

Its subcellular location is the cell membrane. Its function is as follows. Na(+)/sulfate cotransporter with a probable high-affinity for sulfate and a proteasome dependent turnover. This chain is Sodium/sulfate cotransporter 1 (SLT1), found in Chlamydomonas reinhardtii (Chlamydomonas smithii).